Reading from the N-terminus, the 264-residue chain is GTP cyclohydrolase FolE2 (264 aa).

The protein belongs to the GTP cyclohydrolase IV family.

It catalyses the reaction GTP + H2O = 7,8-dihydroneopterin 3'-triphosphate + formate + H(+). The protein operates within cofactor biosynthesis; 7,8-dihydroneopterin triphosphate biosynthesis; 7,8-dihydroneopterin triphosphate from GTP: step 1/1. Its function is as follows. Converts GTP to 7,8-dihydroneopterin triphosphate. This Ruthia magnifica subsp. Calyptogena magnifica protein is GTP cyclohydrolase FolE2.